The primary structure comprises 214 residues: Ras-like protein 2 (214 aa).

Residues 19–24 (GVGKSC), 35–41 (VDEYDPT), 65–66 (AG), 122–125 (NKCD), and 152–154 (SAK) contribute to the GTP site. Residues 38-46 (YDPTIEDSY) carry the Effector region motif. Positions 178–197 (QGYSTGSGGSNAGGPSNKME) are disordered. The residue at position 211 (cysteine 211) is a Cysteine methyl ester. A lipid anchor (S-farnesyl cysteine) is attached at cysteine 211. The propeptide at 212–214 (VLM) is removed in mature form.

The protein belongs to the small GTPase superfamily. Ras family. In terms of assembly, interacts with farnesyltransferase beta subunit RAM1.

The protein localises to the cell membrane. Alternates between an inactive form bound to GDP and an active form bound to GTP. Activated by a guanine nucleotide-exchange factor (GEF) and inactivated by a GTPase-activating protein (GAP). In terms of biological role, modulates the activity of the adenylate cyclase catalytic subunit and therefore affects the biosynthesis of cyclic-AMP. Plays a role in both surface attachment and surface recognition of appressoria, a highly specialized infection structure for plant penetration. Regulates appressorium formation by coordinated regulation of cAMP signaling and Pmk1 MAPK pathways. The protein is Ras-like protein 2 of Pyricularia oryzae (strain 70-15 / ATCC MYA-4617 / FGSC 8958) (Rice blast fungus).